Here is a 131-residue protein sequence, read N- to C-terminus: Large ribosomal subunit protein bL17 (131 aa).

This sequence belongs to the bacterial ribosomal protein bL17 family. As to quaternary structure, part of the 50S ribosomal subunit. Contacts protein L32.

The sequence is that of Large ribosomal subunit protein bL17 from Cupriavidus pinatubonensis (strain JMP 134 / LMG 1197) (Cupriavidus necator (strain JMP 134)).